Consider the following 327-residue polypeptide: Acetyl-coenzyme A carboxylase carboxyl transferase subunit beta (327 aa).

A CoA carboxyltransferase N-terminal domain is found at 24–293; the sequence is LWIKCPDTGQ…LTVTTAVEAP (270 aa). Residues 293-311 are compositionally biased toward low complexity; the sequence is PAEAAAKAEPEATTTEQPG. The disordered stretch occupies residues 293 to 327; sequence PAEAAAKAEPEATTTEQPGAPAPTEPPAQPAAPQA. Residues 312–327 show a composition bias toward pro residues; that stretch reads APAPTEPPAQPAAPQA.

It belongs to the AccD/PCCB family. As to quaternary structure, acetyl-CoA carboxylase is a heterohexamer composed of biotin carboxyl carrier protein (AccB), biotin carboxylase (AccC) and two subunits each of ACCase subunit alpha (AccA) and ACCase subunit beta (AccD).

Its subcellular location is the cytoplasm. The catalysed reaction is N(6)-carboxybiotinyl-L-lysyl-[protein] + acetyl-CoA = N(6)-biotinyl-L-lysyl-[protein] + malonyl-CoA. The protein operates within lipid metabolism; malonyl-CoA biosynthesis; malonyl-CoA from acetyl-CoA: step 1/1. In terms of biological role, component of the acetyl coenzyme A carboxylase (ACC) complex. Biotin carboxylase (BC) catalyzes the carboxylation of biotin on its carrier protein (BCCP) and then the CO(2) group is transferred by the transcarboxylase to acetyl-CoA to form malonyl-CoA. The chain is Acetyl-coenzyme A carboxylase carboxyl transferase subunit beta from Rhodopseudomonas palustris (strain ATCC BAA-98 / CGA009).